Consider the following 820-residue polypeptide: MVRSRSNSVKKDLKRKVDEPVDVQDEFDVEGLIDEGDSDDEDEAEQEVAQENVTKDKKNTSKTENEEDADDESDSDAELEALIGEEEDLSGSELEDELAYFSDAGDDEVDPSILKHLDDGVRLRSLSRSSDQTDELKDVVEIVPGADGKPRMIKKEIHAVYDSDDSDQEESNTIGNVPLSAYDQMPHIGYDINGKRIMRPATGSALDNLLETIDLPEGWTGLLDKSTGKGLNISKEELELIKRIQKNETTDDASNPYEDLVEWFSSKTEIMPLSAAPEPKRRFIPSKHEAKRVMKMVQAIRQGKLLTKPKEDPDARPNYDVWADNLTDVQDHVMTLRAPKMPPPTHDESYNPPAEYLPTEEEIAEWNALAPSERERNYVPKKYTALRHVPGYSESVRERFERSLDLYLAPRVRKNKLNIDPDSLIPDLPSPKDLMPFPIRCATTYKGHKGKVRAISVDPSGEFLATGGDDGTLRVWEVLTGRELYRCRLVASIDAQDDSVECVQWNPAVPGMLAASAGEHIFLIVPPTLFDFDIENTGREKIEQGWGFAEGGREQQDIDTKGLDDDADSDSDDETGHVKKKSPPAKWITPTAKQQASGIGAIITATKTIKRLAWHRKGDYLVTVAPSAQHRAVAIHQISKHSSQSPFNKSKGIVQDAMFHPFRPHLYVATQRYVRIYDLAKQVMAKKLMPGARWVSSLDIHPRGDNVILSSFDKRLLWHDLDLSDKPYKTLRYHEKAVRHAAFHKGGLPLFCSASDDGNINIFHGTVYDDMMTNPLLVPLKVLKGHDVKSGLGILRVEWHPREAWLFSAAADGTAKLWTT.

The segment at 1 to 111 (MVRSRSNSVK…SDAGDDEVDP (111 aa)) is disordered. Residues 9–19 (VKKDLKRKVDE) show a composition bias toward basic and acidic residues. A compositionally biased stretch (acidic residues) spans 20 to 48 (PVDVQDEFDVEGLIDEGDSDDEDEAEQEV). Residues 53 to 64 (VTKDKKNTSKTE) show a composition bias toward basic and acidic residues. Residues 65-110 (NEEDADDESDSDAELEALIGEEEDLSGSELEDELAYFSDAGDDEVD) show a composition bias toward acidic residues. The tract at residues 282–395 (RFIPSKHEAK…LRHVPGYSES (114 aa)) is required for interaction with NOP7. The segment at 395 to 431 (SVRERFERSLDLYLAPRVRKNKLNIDPDSLIPDLPSP) is required for interaction with YTM1. WD repeat units follow at residues 447 to 486 (GHKGKVRAISVDPSGEFLATGGDDGTLRVWEVLTGRELYR) and 495 to 535 (AQDD…FDIE). A disordered region spans residues 545–585 (GWGFAEGGREQQDIDTKGLDDDADSDSDDETGHVKKKSPPA). Over residues 551-564 (GGREQQDIDTKGLD) the composition is skewed to basic and acidic residues. WD repeat units follow at residues 604-646 (TATK…SQSP), 649-687 (KSKGIVQDAMFHPFRPHLYVATQRYVRIYDLAKQVMAKK), 690-729 (PGARWVSSLDIHPRGDNVILSSFDKRLLWHDLDLSDKPYK), 733-773 (YHEK…DMMT), and 789-820 (KSGLGILRVEWHPREAWLFSAAADGTAKLWTT).

It belongs to the WD repeat BOP1/ERB1 family. In terms of assembly, component of the NOP7 complex, composed of ERB1, NOP7 and YTM1. The complex is held together by ERB1, which interacts with NOP7 via its N-terminal domain and with YTM1 via a high-affinity interaction between the seven-bladed beta-propeller domains of the 2 proteins. The NOP7 complex associates with the 66S pre-ribosome.

Its subcellular location is the nucleus. The protein localises to the nucleolus. The protein resides in the nucleoplasm. Functionally, component of the NOP7 complex, which is required for maturation of the 25S and 5.8S ribosomal RNAs and formation of the 60S ribosome. The chain is Ribosome biogenesis protein ERB1 from Yarrowia lipolytica (strain CLIB 122 / E 150) (Yeast).